Consider the following 258-residue polypeptide: Thiazole synthase (258 aa).

Lys-97 functions as the Schiff-base intermediate with DXP in the catalytic mechanism. 1-deoxy-D-xylulose 5-phosphate-binding positions include Gly-158, 184–185 (AG), and 206–207 (NT).

The protein belongs to the ThiG family. In terms of assembly, homotetramer. Forms heterodimers with either ThiH or ThiS.

It localises to the cytoplasm. It catalyses the reaction [ThiS sulfur-carrier protein]-C-terminal-Gly-aminoethanethioate + 2-iminoacetate + 1-deoxy-D-xylulose 5-phosphate = [ThiS sulfur-carrier protein]-C-terminal Gly-Gly + 2-[(2R,5Z)-2-carboxy-4-methylthiazol-5(2H)-ylidene]ethyl phosphate + 2 H2O + H(+). Its pathway is cofactor biosynthesis; thiamine diphosphate biosynthesis. In terms of biological role, catalyzes the rearrangement of 1-deoxy-D-xylulose 5-phosphate (DXP) to produce the thiazole phosphate moiety of thiamine. Sulfur is provided by the thiocarboxylate moiety of the carrier protein ThiS. In vitro, sulfur can be provided by H(2)S. This chain is Thiazole synthase, found in Marinomonas sp. (strain MWYL1).